The following is a 1388-amino-acid chain: Dicer-like protein 2 (1388 aa).

In terms of domain architecture, Helicase ATP-binding spans 23–203 (MLEASMKENI…LLMVESNLDA (181 aa)). Residue 36 to 43 (MDTGSGKT) coordinates ATP. The short motif at 144–147 (DEAH) is the DEAH box element. Residues 368–537 (KFESLLNFLD…DDERQLQSVS (170 aa)) enclose the Helicase C-terminal domain. A Dicer dsRNA-binding fold domain is found at 564-658 (AMAHLHHFCA…LPLTKKPELK (95 aa)). 2 consecutive RNase III domains span residues 906-1059 (ISAI…VDGG) and 1098-1281 (NDRL…VDSG). The Mg(2+) site is built by Glu1137, Asp1267, and Glu1270.

This sequence belongs to the helicase family. Dicer subfamily. Requires Mg(2+) as cofactor. It depends on Mn(2+) as a cofactor.

Dicer-like endonuclease involved in cleaving double-stranded RNA in the RNA interference (RNAi) pathway. Produces 21 to 25 bp dsRNAs (siRNAs) which target the selective destruction of homologous RNAs leading to sequence-specific suppression of gene expression, called post-transcriptional gene silencing (PTGS). Part of a broad host defense response against viral infection and transposons. In Aspergillus fumigatus (strain ATCC MYA-4609 / CBS 101355 / FGSC A1100 / Af293) (Neosartorya fumigata), this protein is Dicer-like protein 2 (dcl2).